We begin with the raw amino-acid sequence, 740 residues long: UvrABC system protein B (740 aa).

The segment at 1-36 (MTIAIRTTLDEPENHSDFVPHRPSRPEKTEPSKPFR) is disordered. The segment covering 8–33 (TLDEPENHSDFVPHRPSRPEKTEPSK) has biased composition (basic and acidic residues). The region spanning 56–444 (KDIQKGERDQ…GGVFVEQIIR (389 aa)) is the Helicase ATP-binding domain. 69 to 76 (GVTGSGKT) provides a ligand contact to ATP. The short motif at 122-145 (YYDYYQPEAYVPRTDTYIEKDSAI) is the Beta-hairpin element. A Helicase C-terminal domain is found at 461 to 627 (QVDNLIFEAK…TVKRQVDDIV (167 aa)). Residues 651 to 686 (ARSISETEKEMLEAAANLEFEKAAQLRDVLHQLKRQ) form the UVR domain. Positions 687-740 (ELGLPPEKSSEIQGRSEAGRPGTRKTRSDKAREAKASKRVKQEAGEKLLRSRGH) are disordered. A compositionally biased stretch (basic and acidic residues) spans 712 to 740 (TRSDKAREAKASKRVKQEAGEKLLRSRGH).

Belongs to the UvrB family. In terms of assembly, forms a heterotetramer with UvrA during the search for lesions. Interacts with UvrC in an incision complex.

It localises to the cytoplasm. The UvrABC repair system catalyzes the recognition and processing of DNA lesions. A damage recognition complex composed of 2 UvrA and 2 UvrB subunits scans DNA for abnormalities. Upon binding of the UvrA(2)B(2) complex to a putative damaged site, the DNA wraps around one UvrB monomer. DNA wrap is dependent on ATP binding by UvrB and probably causes local melting of the DNA helix, facilitating insertion of UvrB beta-hairpin between the DNA strands. Then UvrB probes one DNA strand for the presence of a lesion. If a lesion is found the UvrA subunits dissociate and the UvrB-DNA preincision complex is formed. This complex is subsequently bound by UvrC and the second UvrB is released. If no lesion is found, the DNA wraps around the other UvrB subunit that will check the other stand for damage. This chain is UvrABC system protein B, found in Zymomonas mobilis subsp. mobilis (strain ATCC 31821 / ZM4 / CP4).